An 88-amino-acid polypeptide reads, in one-letter code: Large ribosomal subunit protein bL27 (88 aa).

Belongs to the bacterial ribosomal protein bL27 family.

The sequence is that of Large ribosomal subunit protein bL27 from Mycolicibacterium smegmatis (strain ATCC 700084 / mc(2)155) (Mycobacterium smegmatis).